The sequence spans 136 residues: Non-structural protein 1 (136 aa).

The protein belongs to the pneumovirus non-structural protein 1 family. As to quaternary structure, monomer. Homomultimer. Heteromultimer with NS2. Interacts with the matrix protein M. Interacts with host ELOC and CUL2; this interaction allows NS1 to form an active E3 ligase with ELOC and CUL2. Interacts with host IRF3; this interaction leads to the disrupted association of IRF3 with CREBBP and thus reduced binding of IRF3 to the IFN-beta promoter. Interacts with host MAVS; this interaction prevents MAVS binding to RIGI and inhibits signaling pathway leading to interferon production. Interacts with host TRIM25 (via SPRY domain); this interaction suppresses RIGI ubiquitination and results in decreased interaction between RIGI and MAVS.

Its subcellular location is the host cytoplasm. It is found in the host mitochondrion. The protein resides in the host nucleus. Its function is as follows. Plays a major role in antagonizing the type I IFN-mediated antiviral response by degrading or inhibiting multiple cellular factors required for either IFN induction or response pathways. Acts cooperatively with NS2 to repress activation and nuclear translocation of host IFN-regulatory factor IRF3. Also disrupts the association of IRF3 with CREBBP. Interacts with host mitochondrial-associated membrane (MAM) MAVS and prevents the interaction with RIGI. Interacts with TRIM25 to suppress TRIM25-mediated RIGI ubiquitination and thereby RIGI-MAVS interaction. Together with NS2, participates in the proteasomal degradation of host STAT2, IRF3, IRF7, TBK1 and RIGI through a NS-degradasome involving CUL2 and Elongin-C. The degradasome requires an intact mitochondrial MAVS. Decreases the levels of host TRAF3 and IKBKE/IKK-epsilon. As functions other than disruptions of the type I IFN-mediated antiviral signaling pathways, induces host SOCS1 and SOCS3 expression. Suppresses premature apoptosis by an NF-kappa-B-dependent, interferon-independent mechanism and thus facilitates virus growth. Additionally, NS1 may serve some inhibitory role in viral transcription and RNA replication. Suppresses proliferation and activation of host CD103+ CD8+ cytotoxic T-lymphocytes and Th17 helper T-lymphocytes. The polypeptide is Non-structural protein 1 (1C) (Ovis aries (Sheep)).